Reading from the N-terminus, the 632-residue chain is X-ray repair cross-complementing protein 5 (632 aa).

Catalysis depends on arginine 52, which acts as the Schiff-base intermediate with DNA; for 5'-deoxyribose-5-phosphate lyase activity. The 208-residue stretch at leucine 283–lysine 490 folds into the Ku domain. The interval aspartate 555 to lysine 578 is disordered. The 35-residue stretch at leucine 595–phenylalanine 629 folds into the SAP domain.

This sequence belongs to the ku70 family. Heterodimer composed of XRCC5/Ku80 and XRCC6/Ku70. Component of the core long-range non-homologous end joining (NHEJ) complex (also named DNA-PK complex) composed of PRKDC, LIG4, XRCC4, XRCC6/Ku70, XRCC5/Ku86 and NHEJ1/XLF. Additional component of the NHEJ complex includes PAXX. Following autophosphorylation, PRKDC dissociates from DNA, leading to formation of the short-range NHEJ complex, composed of LIG4, XRCC4, XRCC6/Ku70, XRCC5/Ku86 and NHEJ1/XLF. Phosphorylated on serine residues.

It is found in the nucleus. It localises to the chromosome. In terms of biological role, single-stranded DNA-dependent ATP-dependent helicase that plays a key role in DNA non-homologous end joining (NHEJ) by recruiting DNA-PK to DNA. Required for double-strand break repair and V(D)J recombination. Also has a role in chromosome translocation. Has a role in chromosome translocation. The DNA helicase II complex binds preferentially to fork-like ends of double-stranded DNA in a cell cycle-dependent manner. It works in the 3'-5' direction. During NHEJ, the XRCC5-XRRC6 dimer performs the recognition step: it recognizes and binds to the broken ends of the DNA and protects them from further resection. Binding to DNA may be mediated by XRCC6. The XRCC5-XRRC6 dimer acts as a regulatory subunit of the DNA-dependent protein kinase complex DNA-PK by increasing the affinity of the catalytic subunit PRKDC to DNA by 100-fold. The XRCC5-XRRC6 dimer is probably involved in stabilizing broken DNA ends and bringing them together. The assembly of the DNA-PK complex to DNA ends is required for the NHEJ ligation step. Probably also acts as a 5'-deoxyribose-5-phosphate lyase (5'-dRP lyase), by catalyzing the beta-elimination of the 5' deoxyribose-5-phosphate at an abasic site near double-strand breaks. 5'-dRP lyase activity allows to 'clean' the termini of abasic sites, a class of nucleotide damage commonly associated with strand breaks, before such broken ends can be joined. The XRCC5-XRRC6 dimer together with APEX1 acts as a negative regulator of transcription. This Gallus gallus (Chicken) protein is X-ray repair cross-complementing protein 5 (XRCC6).